The primary structure comprises 106 residues: Cuticle protein CP14.6 (106 aa).

The first 16 residues, 1–16 (MKSFFVVALLVAAAAA), serve as a signal peptide directing secretion. The Chitin-binding type R&amp;R domain occupies 37–106 (PQHYSYSVET…PQGAHLPVAA (70 aa)).

In terms of biological role, component of the cuticle of tobacco hornworm. The chain is Cuticle protein CP14.6 (CP14.6) from Manduca sexta (Tobacco hawkmoth).